Here is a 222-residue protein sequence, read N- to C-terminus: Putative auxin response factor 23 (222 aa).

The segment at residues 126 to 222 (FTKVLTASDT…ETGELRVGIR (97 aa)) is a DNA-binding region (TF-B3).

This sequence belongs to the ARF family. As to quaternary structure, homo and heterodimers.

It localises to the nucleus. Its function is as follows. Auxin response factors (ARFs) are transcriptional factors that binds specifically to the DNA sequence 5'-TGTCTC-3' found in the auxin-responsive promoter elements (AuxREs). Could act as transcriptional activator or repressor. Formation of heterodimers with Aux/IAA proteins may alter their ability to modulate early auxin response genes expression. The protein is Putative auxin response factor 23 (ARF23) of Arabidopsis thaliana (Mouse-ear cress).